Reading from the N-terminus, the 644-residue chain is Macrolide export ATP-binding/permease protein MacB (644 aa).

The ABC transporter domain occupies 4–242 (IECKNINRCF…SNVGRIREKA (239 aa)). 40-47 (GQSGSGKS) is a binding site for ATP. 4 helical membrane-spanning segments follow: residues 270-290 (LLTMLGIIIGIASVVSVVALG), 524-544 (IALISLVVGGIGVMNIMLVSV), 574-594 (LICIIGGLVGVGLSAAVSLVF), and 607-627 (AASVIGAVACSTGIGIAFGFM).

The protein belongs to the ABC transporter superfamily. Macrolide exporter (TC 3.A.1.122) family. Homodimer.

The protein resides in the cell inner membrane. Functionally, non-canonical ABC transporter that contains transmembrane domains (TMD), which form a pore in the inner membrane, and an ATP-binding domain (NBD), which is responsible for energy generation. Confers resistance against macrolides. This Neisseria gonorrhoeae (strain ATCC 700825 / FA 1090) protein is Macrolide export ATP-binding/permease protein MacB.